The chain runs to 242 residues: Small ribosomal subunit protein uS2 (242 aa).

It belongs to the universal ribosomal protein uS2 family.

The protein is Small ribosomal subunit protein uS2 of Tolumonas auensis (strain DSM 9187 / NBRC 110442 / TA 4).